We begin with the raw amino-acid sequence, 334 residues long: Fructose-1,6-bisphosphatase class 1 (334 aa).

4 residues coordinate Mg(2+): Glu92, Asp114, Leu116, and Asp117. Residues 117-120 and Asn209 each bind substrate; that span reads DGSS. Residue Glu281 coordinates Mg(2+).

This sequence belongs to the FBPase class 1 family. In terms of assembly, homotetramer. Requires Mg(2+) as cofactor.

Its subcellular location is the cytoplasm. The enzyme catalyses beta-D-fructose 1,6-bisphosphate + H2O = beta-D-fructose 6-phosphate + phosphate. It participates in carbohydrate biosynthesis; gluconeogenesis. The polypeptide is Fructose-1,6-bisphosphatase class 1 (Nitrosomonas eutropha (strain DSM 101675 / C91 / Nm57)).